Consider the following 97-residue polypeptide: Conotoxin Cal6.1e (97 aa).

The first 22 residues, 1–22, serve as a signal peptide directing secretion; sequence MKLTTVLIVAVLVLAACQFTVT. The interval 23–49 is disordered; that stretch reads DNSGDDTENPSLRSAGENQNPDSTKTI. Residues 23-60 constitute a propeptide that is removed on maturation; the sequence is DNSGDDTENPSLRSAGENQNPDSTKTITARATRARTNM. Residues 31–45 are compositionally biased toward polar residues; sequence NPSLRSAGENQNPDS. Cystine bridges form between Cys71–Cys87, Cys78–Cys91, and Cys86–Cys96.

The protein belongs to the conotoxin O1 superfamily. As to expression, expressed by the venom duct.

The protein localises to the secreted. Functionally, probable neurotoxin with unknown target. Possibly targets ion channels. The sequence is that of Conotoxin Cal6.1e from Californiconus californicus (California cone).